The primary structure comprises 494 residues: UPF0371 protein SPH_0451 (494 aa).

Belongs to the UPF0371 family.

The protein is UPF0371 protein SPH_0451 of Streptococcus pneumoniae (strain Hungary19A-6).